The sequence spans 781 residues: Catalase-peroxidase (781 aa).

Positions 1-20 (MLYIYYLFKSLFFHTLFVFS) are cleaved as a signal peptide. A cross-link (tryptophyl-tyrosyl-methioninium (Trp-Tyr) (with M-298)) is located at residues 125–272 (WHSAGTYRIG…LAAVQMGLIY (148 aa)). Histidine 126 serves as the catalytic Proton acceptor. The segment at 237 to 256 (VHHPDEHRGAKEKAAKNSDS) is disordered. A cross-link (tryptophyl-tyrosyl-methioninium (Tyr-Met) (with W-125)) is located at residues 272–298 (YVNPEGPDGRPDPLASARDIRETFARM). Histidine 313 is a heme b binding site. Positions 317–336 (KTHGAAPADNVGPEPEAGEL) are disordered.

It belongs to the peroxidase family. Peroxidase/catalase subfamily. In terms of assembly, homodimer or homotetramer. Heme b serves as cofactor. Post-translationally, formation of the three residue Trp-Tyr-Met cross-link is important for the catalase, but not the peroxidase activity of the enzyme.

It catalyses the reaction H2O2 + AH2 = A + 2 H2O. The enzyme catalyses 2 H2O2 = O2 + 2 H2O. Functionally, bifunctional enzyme with both catalase and broad-spectrum peroxidase activity. The chain is Catalase-peroxidase from Xylella fastidiosa (strain 9a5c).